Consider the following 405-residue polypeptide: Argininosuccinate synthase (405 aa).

An ATP-binding site is contributed by 11 to 19; the sequence is AYSGGLDTS. Y90 is a binding site for L-citrulline. Residue G119 participates in ATP binding. Residues T121, N125, and D126 each coordinate L-aspartate. N125 contacts L-citrulline. Positions 129, 178, 187, 263, and 275 each coordinate L-citrulline.

Belongs to the argininosuccinate synthase family. Type 1 subfamily. As to quaternary structure, homotetramer.

The protein resides in the cytoplasm. It carries out the reaction L-citrulline + L-aspartate + ATP = 2-(N(omega)-L-arginino)succinate + AMP + diphosphate + H(+). Its pathway is amino-acid biosynthesis; L-arginine biosynthesis; L-arginine from L-ornithine and carbamoyl phosphate: step 2/3. The polypeptide is Argininosuccinate synthase (Legionella pneumophila (strain Paris)).